Here is a 150-residue protein sequence, read N- to C-terminus: Snake venom vascular endothelial growth factor toxin barietin (150 aa).

A signal peptide spans 1–24; sequence MAAYLLAVAILFCIQGWPSGTVQG. A Pyrrolidone carboxylic acid (Glu) modification is found at Glu25. Intrachain disulfides connect Cys38/Cys80, Cys69/Cys115, and Cys73/Cys117. Residues 119–150 form a disordered region; it reads PRSGSRVNIGKHKRSPEEGEREPSSPLTPGSL. Residues 122-150 constitute a propeptide that is removed on maturation; it reads GSRVNIGKHKRSPEEGEREPSSPLTPGSL.

This sequence belongs to the PDGF/VEGF growth factor family. Snake venom VEGF subfamily. In terms of assembly, homodimer; disulfide-linked. Interacts with high affinity with VEGF receptor-2 (KDR), and with a lower affinity with VEGF receptor-1 (FLT1). Does not bind VEGF receptor-3 (FLT4) and neuropilin-1 (NRP1). As to expression, expressed by the venom gland.

The protein resides in the secreted. Functionally, snake venom VEGFs that may contribute to venom dispersion and prey subjugation by inducing vascular permeability and hypotension. This protein induces an increase in capillary permeability after intradermal injection, as well as a drastic hypotensive effect after intravenous injection. The hypotension is mediated by nitric oxide (NO), which is produced by VEGF-activated endothelium NO synthase. Also induces angiogenesis in vitro, probably through VEGF receptor (KDR/VEGFR-2) signaling. This is Snake venom vascular endothelial growth factor toxin barietin from Bitis arietans (African puff adder).